Reading from the N-terminus, the 215-residue chain is Cytochrome c biogenesis ATP-binding export protein CcmA (215 aa).

The ABC transporter domain maps to 3 to 215; sequence LEAENLAGER…MAAFSVEDIA (213 aa). 35–42 serves as a coordination point for ATP; sequence GPNGSGKS.

Belongs to the ABC transporter superfamily. CcmA exporter (TC 3.A.1.107) family. In terms of assembly, the complex is composed of two ATP-binding proteins (CcmA) and two transmembrane proteins (CcmB).

Its subcellular location is the cell inner membrane. The catalysed reaction is heme b(in) + ATP + H2O = heme b(out) + ADP + phosphate + H(+). Functionally, part of the ABC transporter complex CcmAB involved in the biogenesis of c-type cytochromes; once thought to export heme, this seems not to be the case, but its exact role is uncertain. Responsible for energy coupling to the transport system. This chain is Cytochrome c biogenesis ATP-binding export protein CcmA, found in Brucella melitensis biotype 1 (strain ATCC 23456 / CCUG 17765 / NCTC 10094 / 16M).